A 376-amino-acid polypeptide reads, in one-letter code: N-acetyldiaminopimelate deacetylase (376 aa).

Aspartate 69 is an active-site residue. Glutamate 128 (proton acceptor) is an active-site residue.

It belongs to the peptidase M20A family. N-acetyldiaminopimelate deacetylase subfamily.

The enzyme catalyses N-acetyl-(2S,6S)-2,6-diaminopimelate + H2O = (2S,6S)-2,6-diaminopimelate + acetate. The protein operates within amino-acid biosynthesis; L-lysine biosynthesis via DAP pathway; LL-2,6-diaminopimelate from (S)-tetrahydrodipicolinate (acetylase route): step 3/3. In terms of biological role, catalyzes the conversion of N-acetyl-diaminopimelate to diaminopimelate and acetate. The polypeptide is N-acetyldiaminopimelate deacetylase (Streptococcus pneumoniae serotype 4 (strain ATCC BAA-334 / TIGR4)).